We begin with the raw amino-acid sequence, 398 residues long: Enoyl-[acyl-carrier-protein] reductase [NADH] (398 aa).

NAD(+)-binding positions include 48–53 (GSSTGY), 74–75 (FE), 111–112 (DA), and 139–140 (LA). Residue Tyr-225 participates in substrate binding. Tyr-235 acts as the Proton donor in catalysis. Residues Lys-244 and 273-275 (VVT) contribute to the NAD(+) site.

It belongs to the TER reductase family. As to quaternary structure, monomer.

The enzyme catalyses a 2,3-saturated acyl-[ACP] + NAD(+) = a (2E)-enoyl-[ACP] + NADH + H(+). It functions in the pathway lipid metabolism; fatty acid biosynthesis. In terms of biological role, involved in the final reduction of the elongation cycle of fatty acid synthesis (FAS II). Catalyzes the reduction of a carbon-carbon double bond in an enoyl moiety that is covalently linked to an acyl carrier protein (ACP). This Pseudomonas aeruginosa (strain UCBPP-PA14) protein is Enoyl-[acyl-carrier-protein] reductase [NADH].